The sequence spans 224 residues: CASP-like protein 3A1 (224 aa).

Topologically, residues 1–59 (MMMNGQKLAPAAEVAVQLPESKVAADNISGTMSGPLVGASGGGTTAAMRPFGRKAEVMH) are cytoplasmic. A helical transmembrane segment spans residues 60–80 (VLLRLLCIITSVAALSFMFTA). Residues 81–106 (QQSSTISIYGFMLPVQSKWSFSHSFE) are Extracellular-facing. Residues 107-127 (YLVGVSAAVAAHSLLQLLISM) traverse the membrane as a helical segment. The Cytoplasmic segment spans residues 128–142 (SRLLRKSPVIPSRSH). A helical membrane pass occupies residues 143 to 163 (AWLIFAGDQVFAYAMISAGAA). The Extracellular portion of the chain corresponds to 164–192 (ASGVTNLNRTGIQHTALPNFCKPLQSFCD). N-linked (GlcNAc...) asparagine glycosylation occurs at Asn171. Residues 193 to 213 (HVAVSIFFTFTSCFLLAASAV) traverse the membrane as a helical segment. The Cytoplasmic segment spans residues 214–224 (QEVIWLSRSKY).

The protein belongs to the Casparian strip membrane proteins (CASP) family. As to quaternary structure, homodimer and heterodimers.

It is found in the cell membrane. The protein is CASP-like protein 3A1 of Populus trichocarpa (Western balsam poplar).